The sequence spans 242 residues: Derlin-1 (242 aa).

The Cytoplasmic segment spans residues 1-20 (MSSPAEYYNSLPPISKAYGT). The chain crosses the membrane as a helical span at residues 21–41 (LCFFATVLCQLQILNPPFLAL). Topologically, residues 42–55 (YYPFVFKKFQIWRL) are lumenal. Residues 56–76 (FTSFFFLGKFSINFGIRLLMI) form a helical membrane-spanning segment. At 77-94 (ARYGVQLEKGAFEKRTAD) the chain is on the cytoplasmic side. The chain crosses the membrane as a helical span at residues 95 to 115 (FLWMMIFGAISLLALSAIPFL). Residues 116 to 157 (DIYFLGVPMVSMLLYVWSREYPNSQISMYGLVQLRSFYLPWA) lie on the Lumenal side of the membrane. A helical transmembrane segment spans residues 158-178 (MLGLDVIFGSEILPGLLGILV). Topologically, residues 179-242 (GHTYYFLSVL…FRGRSYRLSQ (64 aa)) are cytoplasmic.

The protein belongs to the derlin family. Seedling shoots and roots.

The protein resides in the endoplasmic reticulum membrane. Functionally, may be involved in the degradation process of specific misfolded endoplasmic reticulum (ER) luminal proteins. The sequence is that of Derlin-1 (DER1) from Oryza sativa subsp. japonica (Rice).